A 233-amino-acid polypeptide reads, in one-letter code: Large ribosomal subunit protein uL1 (233 aa).

Belongs to the universal ribosomal protein uL1 family. As to quaternary structure, part of the 50S ribosomal subunit.

Functionally, binds directly to 23S rRNA. The L1 stalk is quite mobile in the ribosome, and is involved in E site tRNA release. In terms of biological role, protein L1 is also a translational repressor protein, it controls the translation of the L11 operon by binding to its mRNA. The sequence is that of Large ribosomal subunit protein uL1 from Shewanella piezotolerans (strain WP3 / JCM 13877).